The primary structure comprises 388 residues: Succinate--CoA ligase [ADP-forming] subunit beta (388 aa).

Residues 9 to 244 (KQIFAQYGLP…PSQEDAREAA (236 aa)) form the ATP-grasp domain. ATP contacts are provided by residues K46, 53-55 (GRG), E99, A102, and E107. 2 residues coordinate Mg(2+): N199 and D213. Residues N264 and 321 to 323 (GIV) each bind substrate.

Belongs to the succinate/malate CoA ligase beta subunit family. In terms of assembly, heterotetramer of two alpha and two beta subunits. The cofactor is Mg(2+).

The enzyme catalyses succinate + ATP + CoA = succinyl-CoA + ADP + phosphate. The catalysed reaction is GTP + succinate + CoA = succinyl-CoA + GDP + phosphate. The protein operates within carbohydrate metabolism; tricarboxylic acid cycle; succinate from succinyl-CoA (ligase route): step 1/1. Functionally, succinyl-CoA synthetase functions in the citric acid cycle (TCA), coupling the hydrolysis of succinyl-CoA to the synthesis of either ATP or GTP and thus represents the only step of substrate-level phosphorylation in the TCA. The beta subunit provides nucleotide specificity of the enzyme and binds the substrate succinate, while the binding sites for coenzyme A and phosphate are found in the alpha subunit. The chain is Succinate--CoA ligase [ADP-forming] subunit beta from Mannheimia succiniciproducens (strain KCTC 0769BP / MBEL55E).